We begin with the raw amino-acid sequence, 417 residues long: Putative nickel insertion protein (417 aa).

The tract at residues 69–99 (HEHHHDHGHHHHGHGHHHDHTHDHHHHHEHR) is disordered. Over residues 74-99 (DHGHHHHGHGHHHDHTHDHHHHHEHR) the composition is skewed to basic residues.

It belongs to the LarC family.

The protein is Putative nickel insertion protein of Maridesulfovibrio salexigens (strain ATCC 14822 / DSM 2638 / NCIMB 8403 / VKM B-1763) (Desulfovibrio salexigens).